The primary structure comprises 341 residues: D-aspartate oxidase (341 aa).

Position 1 is a blocked amino end (Met) (Met1). FAD contacts are provided by Asp36, Lys37, Thr43, Ser44, Met50, Gly307, and Ile311. The Microbody targeting signal signature appears at 339 to 341 (SKL).

Belongs to the DAMOX/DASOX family. In terms of assembly, monomer. Interacts with PEX5; the interaction is direct and required for localization of DDO to the peroxisome. Requires FAD as cofactor. In the kidney, expressed in epithelial cells of the proximal tubules and in the liver (at protein level).

The protein resides in the peroxisome matrix. Its subcellular location is the cytoplasm. The protein localises to the cytosol. The catalysed reaction is D-aspartate + O2 + H2O = oxaloacetate + H2O2 + NH4(+). It catalyses the reaction D-glutamate + O2 + H2O = H2O2 + 2-oxoglutarate + NH4(+). Inhibited by phenylglyoxal; chemical modification of arginine residues in the enzyme with phenylglyoxal leads to the irreversible loss of activity towards dicarboxylic D-amino acids, paralleled by a transient appearance of activity versus monocarboxylic ones. Its function is as follows. Selectively catalyzes the oxidative deamination of acidic amino acids. Suppresses the level of D-aspartate in the brain, an amino acid that can act as an agonist for glutamate receptors. Protects the organism from the toxicity of D-amino acids. May also function in the intestine. This chain is D-aspartate oxidase (DDO), found in Bos taurus (Bovine).